We begin with the raw amino-acid sequence, 540 residues long: Chaperonin GroEL (540 aa).

ATP is bound by residues 29–32, 86–90, Gly413, 476–478, and Asp492; these read TLGP, DGTTT, and NAA.

The protein belongs to the chaperonin (HSP60) family. Forms a cylinder of 14 subunits composed of two heptameric rings stacked back-to-back. Interacts with the co-chaperonin GroES.

It localises to the cytoplasm. The catalysed reaction is ATP + H2O + a folded polypeptide = ADP + phosphate + an unfolded polypeptide.. Together with its co-chaperonin GroES, plays an essential role in assisting protein folding. The GroEL-GroES system forms a nano-cage that allows encapsulation of the non-native substrate proteins and provides a physical environment optimized to promote and accelerate protein folding. The polypeptide is Chaperonin GroEL (Streptococcus gordonii).